Consider the following 543-residue polypeptide: Chaperonin GroEL (543 aa).

Residues 29–32 (TLGP), 86–90 (DGTTT), G413, 478–480 (DAL), and D494 contribute to the ATP site. The disordered stretch occupies residues 524–543 (PEPEAPAVPAGMPGGMGGMY).

Belongs to the chaperonin (HSP60) family. As to quaternary structure, forms a cylinder of 14 subunits composed of two heptameric rings stacked back-to-back. Interacts with the co-chaperonin GroES.

The protein localises to the cytoplasm. It carries out the reaction ATP + H2O + a folded polypeptide = ADP + phosphate + an unfolded polypeptide.. Functionally, together with its co-chaperonin GroES, plays an essential role in assisting protein folding. The GroEL-GroES system forms a nano-cage that allows encapsulation of the non-native substrate proteins and provides a physical environment optimized to promote and accelerate protein folding. The polypeptide is Chaperonin GroEL (Ruminiclostridium cellulolyticum (strain ATCC 35319 / DSM 5812 / JCM 6584 / H10) (Clostridium cellulolyticum)).